The primary structure comprises 324 residues: Bis(5'-nucleosyl)-tetraphosphatase, symmetrical (324 aa).

Positions 269 to 324 (PGREVTAPATAPRAPRRPRERQGRQRARGGRGGGNGNGNGGNAAAPAAAPGDAPQE) are disordered. The segment covering 282 to 297 (APRRPRERQGRQRARG) has biased composition (basic residues). The segment covering 298-309 (GRGGGNGNGNGG) has biased composition (gly residues). Residues 310–324 (NAAAPAAAPGDAPQE) show a composition bias toward low complexity.

The protein belongs to the Ap4A hydrolase family.

It catalyses the reaction P(1),P(4)-bis(5'-adenosyl) tetraphosphate + H2O = 2 ADP + 2 H(+). Functionally, hydrolyzes diadenosine 5',5'''-P1,P4-tetraphosphate to yield ADP. In Xanthomonas campestris pv. campestris (strain ATCC 33913 / DSM 3586 / NCPPB 528 / LMG 568 / P 25), this protein is Bis(5'-nucleosyl)-tetraphosphatase, symmetrical.